We begin with the raw amino-acid sequence, 247 residues long: Trypsin (247 aa).

The N-terminal stretch at 1–21 (LTTVISYFALVAFALVGVSYA) is a signal peptide. A propeptide spans 22–30 (TPKASINGR) (activation peptide). A Peptidase S1 domain is found at 31–247 (IVGGEMTDIS…QSNFPGVYGI (217 aa)). A disulfide bond links Cys61 and Cys77. Active-site charge relay system residues include His76 and Asp120. Intrachain disulfides connect Cys185–Cys201 and Cys212–Cys236. Ser216 serves as the catalytic Charge relay system.

It belongs to the peptidase S1 family. In terms of tissue distribution, midgut.

It is found in the secreted. Its subcellular location is the extracellular space. It carries out the reaction Preferential cleavage: Arg-|-Xaa, Lys-|-Xaa.. The sequence is that of Trypsin from Simulium vittatum (Striped black fly).